The following is a 364-amino-acid chain: Peroxisomal membrane protein PEX16 (364 aa).

Position 200 is a phosphoserine (Ser200).

Belongs to the peroxin-16 family.

It localises to the peroxisome membrane. Its function is as follows. Involved in the biogenesis of peroxisomes. This chain is Peroxisomal membrane protein PEX16 (pex16), found in Schizosaccharomyces pombe (strain 972 / ATCC 24843) (Fission yeast).